The primary structure comprises 426 residues: Glutamate-1-semialdehyde 2,1-aminomutase (426 aa).

K265 bears the N6-(pyridoxal phosphate)lysine mark.

This sequence belongs to the class-III pyridoxal-phosphate-dependent aminotransferase family. HemL subfamily. In terms of assembly, homodimer. Requires pyridoxal 5'-phosphate as cofactor.

It localises to the cytoplasm. The catalysed reaction is (S)-4-amino-5-oxopentanoate = 5-aminolevulinate. It participates in porphyrin-containing compound metabolism; protoporphyrin-IX biosynthesis; 5-aminolevulinate from L-glutamyl-tRNA(Glu): step 2/2. The polypeptide is Glutamate-1-semialdehyde 2,1-aminomutase (Escherichia coli O81 (strain ED1a)).